Consider the following 80-residue polypeptide: Acyl carrier protein (80 aa).

Positions 3-78 constitute a Carrier domain; sequence DDTFSRIQSI…QVLEYIEAES (76 aa). Position 38 is an O-(pantetheine 4'-phosphoryl)serine (Ser-38).

Belongs to the acyl carrier protein (ACP) family. In terms of processing, 4'-phosphopantetheine is transferred from CoA to a specific serine of apo-ACP by AcpS. This modification is essential for activity because fatty acids are bound in thioester linkage to the sulfhydryl of the prosthetic group.

It localises to the plastid. The protein resides in the chloroplast. It participates in lipid metabolism; fatty acid biosynthesis. Its function is as follows. Carrier of the growing fatty acid chain in fatty acid biosynthesis. The sequence is that of Acyl carrier protein from Trieres chinensis (Marine centric diatom).